Here is a 336-residue protein sequence, read N- to C-terminus: Holliday junction branch migration complex subunit RuvB (336 aa).

Residues 1–184 (MYDEERIVSG…FGIVGHMEYY (184 aa)) are large ATPase domain (RuvB-L). Residues L23, R24, G65, K68, T69, T70, 131-133 (EDY), R174, Y184, and R221 contribute to the ATP site. T69 lines the Mg(2+) pocket. Residues 185 to 255 (NEVDLSQIIK…IVQFALDLLR (71 aa)) form a small ATPAse domain (RuvB-S) region. The head domain (RuvB-H) stretch occupies residues 258–336 (KVGLDRTDRK…HLGIKYNKEG (79 aa)). 2 residues coordinate DNA: R313 and R318.

Belongs to the RuvB family. Homohexamer. Forms an RuvA(8)-RuvB(12)-Holliday junction (HJ) complex. HJ DNA is sandwiched between 2 RuvA tetramers; dsDNA enters through RuvA and exits via RuvB. An RuvB hexamer assembles on each DNA strand where it exits the tetramer. Each RuvB hexamer is contacted by two RuvA subunits (via domain III) on 2 adjacent RuvB subunits; this complex drives branch migration. In the full resolvosome a probable DNA-RuvA(4)-RuvB(12)-RuvC(2) complex forms which resolves the HJ.

The protein localises to the cytoplasm. The catalysed reaction is ATP + H2O = ADP + phosphate + H(+). Its function is as follows. The RuvA-RuvB-RuvC complex processes Holliday junction (HJ) DNA during genetic recombination and DNA repair, while the RuvA-RuvB complex plays an important role in the rescue of blocked DNA replication forks via replication fork reversal (RFR). RuvA specifically binds to HJ cruciform DNA, conferring on it an open structure. The RuvB hexamer acts as an ATP-dependent pump, pulling dsDNA into and through the RuvAB complex. RuvB forms 2 homohexamers on either side of HJ DNA bound by 1 or 2 RuvA tetramers; 4 subunits per hexamer contact DNA at a time. Coordinated motions by a converter formed by DNA-disengaged RuvB subunits stimulates ATP hydrolysis and nucleotide exchange. Immobilization of the converter enables RuvB to convert the ATP-contained energy into a lever motion, pulling 2 nucleotides of DNA out of the RuvA tetramer per ATP hydrolyzed, thus driving DNA branch migration. The RuvB motors rotate together with the DNA substrate, which together with the progressing nucleotide cycle form the mechanistic basis for DNA recombination by continuous HJ branch migration. Branch migration allows RuvC to scan DNA until it finds its consensus sequence, where it cleaves and resolves cruciform DNA. This Ligilactobacillus salivarius (strain UCC118) (Lactobacillus salivarius) protein is Holliday junction branch migration complex subunit RuvB.